Consider the following 27-residue polypeptide: Protein YkiD (27 aa).

This Escherichia coli (strain K12) protein is Protein YkiD.